The chain runs to 518 residues: Probable cytochrome P450 9h1 (518 aa).

Cys-462 is a heme binding site.

This sequence belongs to the cytochrome P450 family. It depends on heme as a cofactor.

It localises to the endoplasmic reticulum membrane. The protein resides in the microsome membrane. In terms of biological role, may be involved in the metabolism of insect hormones and in the breakdown of synthetic insecticides. The polypeptide is Probable cytochrome P450 9h1 (Cyp9h1) (Drosophila melanogaster (Fruit fly)).